Here is a 254-residue protein sequence, read N- to C-terminus: NAD kinase (254 aa).

Asp44 acts as the Proton acceptor in catalysis. NAD(+)-binding positions include 44 to 45 (DG), 114 to 115 (NE), Asp144, Ala152, 155 to 160 (TAYNYS), and Ala179.

The protein belongs to the NAD kinase family. A divalent metal cation is required as a cofactor.

The protein resides in the cytoplasm. It carries out the reaction NAD(+) + ATP = ADP + NADP(+) + H(+). Involved in the regulation of the intracellular balance of NAD and NADP, and is a key enzyme in the biosynthesis of NADP. Catalyzes specifically the phosphorylation on 2'-hydroxyl of the adenosine moiety of NAD to yield NADP. In Cereibacter sphaeroides (strain ATCC 17029 / ATH 2.4.9) (Rhodobacter sphaeroides), this protein is NAD kinase.